The sequence spans 379 residues: Cytochrome b (379 aa).

4 helical membrane-spanning segments follow: residues 34-54 (FGSL…LLAM), 78-99 (WLIR…YLHI), 114-134 (WNTG…GYVL), and 179-199 (FFAL…IHLT). Positions 84 and 98 each coordinate heme b. Positions 183 and 197 each coordinate heme b. A ubiquinone is bound at residue histidine 202. Helical transmembrane passes span 227 to 247 (LKDA…AFFS), 289 to 309 (LGGV…PFLH), 321 to 341 (LSQI…WIGS), and 348 to 368 (FIII…VLFP).

It belongs to the cytochrome b family. As to quaternary structure, the cytochrome bc1 complex contains 11 subunits: 3 respiratory subunits (MT-CYB, CYC1 and UQCRFS1), 2 core proteins (UQCRC1 and UQCRC2) and 6 low-molecular weight proteins (UQCRH/QCR6, UQCRB/QCR7, UQCRQ/QCR8, UQCR10/QCR9, UQCR11/QCR10 and a cleavage product of UQCRFS1). This cytochrome bc1 complex then forms a dimer. Heme b is required as a cofactor.

It is found in the mitochondrion inner membrane. Functionally, component of the ubiquinol-cytochrome c reductase complex (complex III or cytochrome b-c1 complex) that is part of the mitochondrial respiratory chain. The b-c1 complex mediates electron transfer from ubiquinol to cytochrome c. Contributes to the generation of a proton gradient across the mitochondrial membrane that is then used for ATP synthesis. This is Cytochrome b (MT-CYB) from Rhea americana (Greater rhea).